Reading from the N-terminus, the 932-residue chain is Glycine dehydrogenase (decarboxylating) (932 aa).

An N6-(pyridoxal phosphate)lysine modification is found at K685.

Belongs to the GcvP family. In terms of assembly, the glycine cleavage system is composed of four proteins: P, T, L and H. It depends on pyridoxal 5'-phosphate as a cofactor.

It catalyses the reaction N(6)-[(R)-lipoyl]-L-lysyl-[glycine-cleavage complex H protein] + glycine + H(+) = N(6)-[(R)-S(8)-aminomethyldihydrolipoyl]-L-lysyl-[glycine-cleavage complex H protein] + CO2. The glycine cleavage system catalyzes the degradation of glycine. The P protein binds the alpha-amino group of glycine through its pyridoxal phosphate cofactor; CO(2) is released and the remaining methylamine moiety is then transferred to the lipoamide cofactor of the H protein. This chain is Glycine dehydrogenase (decarboxylating), found in Brucella abortus (strain S19).